We begin with the raw amino-acid sequence, 245 residues long: Protein OXIDATIVE STRESS 3 LIKE 6 (245 aa).

The disordered stretch occupies residues Q46–Q90. A compositionally biased stretch (acidic residues) spans S75–A86. The short motif at N143–A151 is the Nuclear localization signal element. A kinase-inducible domain (KID) region spans residues D203–S230.

The protein localises to the nucleus. Its function is as follows. Probable transcription factor. Promotes slightly the tolerance to cadmium (Cd) and to oxidizing chemicals (e.g. diamide). The protein is Protein OXIDATIVE STRESS 3 LIKE 6 of Arabidopsis thaliana (Mouse-ear cress).